Consider the following 432-residue polypeptide: Putative D-alanyl-D-alanine carboxypeptidase (432 aa).

A helical; Signal-anchor membrane pass occupies residues 7 to 25 (ATVLLTFSLSAFAVEYPVL).

It belongs to the peptidase S12 family. YfeW subfamily.

It localises to the cell inner membrane. The enzyme catalyses Preferential cleavage: (Ac)2-L-Lys-D-Ala-|-D-Ala. Also transpeptidation of peptidyl-alanyl moieties that are N-acyl substituents of D-alanine.. This is Putative D-alanyl-D-alanine carboxypeptidase from Salmonella paratyphi A (strain ATCC 9150 / SARB42).